A 400-amino-acid chain; its full sequence is Putative transposase for insertion sequence element IS5376 (400 aa).

The region spanning 5–67 is the HTH IS21-type domain; it reads GEFFMIKEMY…PFKPYLQKRM (63 aa). The segment at residues 20–39 is a DNA-binding region (H-T-H motif); that stretch reads ISDIARELGIDRKTVRKYIH. The tract at residues 35–55 is disordered; sequence RKYIHSPNPPSKSKRKQRKSK. The Integrase catalytic domain occupies 113–287; sequence YETLPGEQMQ…SPQERWAEES (175 aa).

It belongs to the transposase IS21/IS408/IS1162 family.

Involved in the transposition of the insertion sequence. The protein is Putative transposase for insertion sequence element IS5376 of Geobacillus stearothermophilus (Bacillus stearothermophilus).